The primary structure comprises 363 residues: Cytoplasmic envelopment protein 2 (363 aa).

Belongs to the herpesviridae cytoplasmic envelopment protein 2 family. Interacts with cytoplasmic envelopment protein 3 and with the capsid.

Its subcellular location is the virion tegument. It localises to the host cytoplasm. It is found in the host nucleus. Plays a critical role in cytoplasmic virus egress. Participates in the final step of tegumentation and envelope acquisition within the host cytoplasm by directly interacting with the capsid. Upon virion binding to target cell, a signaling cascade is triggered to disrupt the interaction with the capsid, thereby preparing capsid uncoating. This is Cytoplasmic envelopment protein 2 (44) from Varicella-zoster virus (strain Dumas) (HHV-3).